The following is a 225-amino-acid chain: UPF0758 protein XC_3944 (225 aa).

One can recognise an MPN domain in the interval 102 to 224 (ALSDPSSVGR…PVSLAERGWV (123 aa)). Zn(2+)-binding residues include H173, H175, and D186. The JAMM motif signature appears at 173-186 (HNHPSGNPEPSEAD).

This sequence belongs to the UPF0758 family.

This chain is UPF0758 protein XC_3944, found in Xanthomonas campestris pv. campestris (strain 8004).